The following is a 607-amino-acid chain: Threonine--tRNA ligase (607 aa).

A catalytic region spans residues 200-502 (DHRKLGRELG…LIEEYAGDFP (303 aa)). Positions 299, 350, and 479 each coordinate Zn(2+).

Belongs to the class-II aminoacyl-tRNA synthetase family. In terms of assembly, homodimer. Zn(2+) serves as cofactor.

The protein resides in the cytoplasm. The enzyme catalyses tRNA(Thr) + L-threonine + ATP = L-threonyl-tRNA(Thr) + AMP + diphosphate + H(+). Its function is as follows. Catalyzes the attachment of threonine to tRNA(Thr) in a two-step reaction: L-threonine is first activated by ATP to form Thr-AMP and then transferred to the acceptor end of tRNA(Thr). Also edits incorrectly charged L-seryl-tRNA(Thr). The chain is Threonine--tRNA ligase from Synechococcus sp. (strain ATCC 27144 / PCC 6301 / SAUG 1402/1) (Anacystis nidulans).